The chain runs to 390 residues: Chaperone protein DnaJ (390 aa).

In terms of domain architecture, J spans 6–70; that stretch reads DYYEILGVPR…QKRAQYDQFG (65 aa). The segment at 146-228 adopts a CR-type zinc-finger fold; it reads GSEKEIYVTR…CHGTGKVRRK (83 aa). Zn(2+) is bound by residues cysteine 159, cysteine 162, cysteine 176, cysteine 179, cysteine 202, cysteine 205, cysteine 216, and cysteine 219. 4 CXXCXGXG motif repeats span residues 159–166, 176–183, 202–209, and 216–223; these read CPTCKGKG, CDMCNGTG, CPKCHGTG, and CHECHGTG.

This sequence belongs to the DnaJ family. As to quaternary structure, homodimer. The cofactor is Zn(2+).

It is found in the cytoplasm. Its function is as follows. Participates actively in the response to hyperosmotic and heat shock by preventing the aggregation of stress-denatured proteins and by disaggregating proteins, also in an autonomous, DnaK-independent fashion. Unfolded proteins bind initially to DnaJ; upon interaction with the DnaJ-bound protein, DnaK hydrolyzes its bound ATP, resulting in the formation of a stable complex. GrpE releases ADP from DnaK; ATP binding to DnaK triggers the release of the substrate protein, thus completing the reaction cycle. Several rounds of ATP-dependent interactions between DnaJ, DnaK and GrpE are required for fully efficient folding. Also involved, together with DnaK and GrpE, in the DNA replication of plasmids through activation of initiation proteins. This chain is Chaperone protein DnaJ, found in Dictyoglomus thermophilum (strain ATCC 35947 / DSM 3960 / H-6-12).